We begin with the raw amino-acid sequence, 86 residues long: Exodeoxyribonuclease 7 small subunit (86 aa).

Belongs to the XseB family. As to quaternary structure, heterooligomer composed of large and small subunits.

It localises to the cytoplasm. The enzyme catalyses Exonucleolytic cleavage in either 5'- to 3'- or 3'- to 5'-direction to yield nucleoside 5'-phosphates.. In terms of biological role, bidirectionally degrades single-stranded DNA into large acid-insoluble oligonucleotides, which are then degraded further into small acid-soluble oligonucleotides. The chain is Exodeoxyribonuclease 7 small subunit from Xanthomonas oryzae pv. oryzae (strain MAFF 311018).